A 720-amino-acid chain; its full sequence is Aminopeptidase RNPEPL1 (720 aa).

321–325 (VAMEN) serves as a coordination point for substrate. His348 lines the Zn(2+) pocket. Glu349 acts as the Proton acceptor in catalysis. Residues His352 and Glu371 each contribute to the Zn(2+) site. Residues 671-708 (GLGPSAEPSTEPSTDLGGAEADTNPDSPALLLGDEAPS) form a disordered region.

It belongs to the peptidase M1 family. Zn(2+) serves as cofactor.

It carries out the reaction Release of N-terminal amino acids, preferentially methionine, from peptides and arylamides.. Broad specificity aminopeptidase which preferentially hydrolyzes an N-terminal methionine, citrulline or glutamine. The polypeptide is Aminopeptidase RNPEPL1 (Mus musculus (Mouse)).